A 539-amino-acid chain; its full sequence is Membrane protein insertase YidC (539 aa).

Residues 6–26 (NILLIALALVSFLLFQQWNVA) traverse the membrane as a helical segment. The segment covering 35-44 (EQAQSGSTLP) has biased composition (polar residues). The tract at residues 35–55 (EQAQSGSTLPAPSYADDLDPA) is disordered. A run of 4 helical transmembrane segments spans residues 341–361 (SFIQ…TFIV), 416–436 (LGGC…YWAL), 454–474 (LSAQ…MFLI), and 495–515 (PVMF…YWLV).

The protein belongs to the OXA1/ALB3/YidC family. Type 1 subfamily. In terms of assembly, interacts with the Sec translocase complex via SecD. Specifically interacts with transmembrane segments of nascent integral membrane proteins during membrane integration.

It localises to the cell inner membrane. Its function is as follows. Required for the insertion and/or proper folding and/or complex formation of integral membrane proteins into the membrane. Involved in integration of membrane proteins that insert both dependently and independently of the Sec translocase complex, as well as at least some lipoproteins. Aids folding of multispanning membrane proteins. The chain is Membrane protein insertase YidC from Vibrio atlanticus (strain LGP32) (Vibrio splendidus (strain Mel32)).